Reading from the N-terminus, the 239-residue chain is MVQHLTAEEIIQYISDAKKSTPIKVYLNGNFEGITYPESFKVFGSEQSKVIFCEADDWKPFYEAYGSQFEDIEIEMDRRNSAIPLKDLTNTNARIEPGAFIREQAIIEDGAVVMMGATINIGAVVGEGTMIDMNATLGGRATTGKNVHVGAGAVLAGVIEPPSASPVIIEDDVLIGANAVILEGVRVGKGAIVAAGAIVTQDVPAGAVVAGTPAKVIKQASEVQDTKKEIVAALRKLND.

Belongs to the transferase hexapeptide repeat family. DapH subfamily.

It carries out the reaction (S)-2,3,4,5-tetrahydrodipicolinate + acetyl-CoA + H2O = L-2-acetamido-6-oxoheptanedioate + CoA. Its pathway is amino-acid biosynthesis; L-lysine biosynthesis via DAP pathway; LL-2,6-diaminopimelate from (S)-tetrahydrodipicolinate (acetylase route): step 1/3. In terms of biological role, catalyzes the transfer of an acetyl group from acetyl-CoA to tetrahydrodipicolinate. In Staphylococcus aureus (strain JH9), this protein is 2,3,4,5-tetrahydropyridine-2,6-dicarboxylate N-acetyltransferase.